Consider the following 59-residue polypeptide: Transcription elongation factor Spt4 (59 aa).

Positions 4, 7, 16, and 19 each coordinate Zn(2+).

Belongs to the archaeal Spt4 family. Heterodimer composed of Spt4 and Spt5.

Functionally, stimulates transcription elongation. The polypeptide is Transcription elongation factor Spt4 (Methanocaldococcus jannaschii (strain ATCC 43067 / DSM 2661 / JAL-1 / JCM 10045 / NBRC 100440) (Methanococcus jannaschii)).